Here is a 461-residue protein sequence, read N- to C-terminus: tRNA modification GTPase MnmE (461 aa).

The (6S)-5-formyl-5,6,7,8-tetrahydrofolate site is built by arginine 27, glutamate 89, and arginine 128. The region spanning 224–382 is the TrmE-type G domain; it reads GLKTAIVGRP…LEALIKKLFF (159 aa). Asparagine 234 serves as a coordination point for K(+). Residues 234–239, 253–259, and 278–281 each bind GTP; these read NVGKSS, TDVAGTT, and DTAG. Serine 238 contributes to the Mg(2+) binding site. K(+) is bound by residues threonine 253, valine 255, and threonine 258. Residue threonine 259 participates in Mg(2+) binding. Lysine 461 lines the (6S)-5-formyl-5,6,7,8-tetrahydrofolate pocket.

Belongs to the TRAFAC class TrmE-Era-EngA-EngB-Septin-like GTPase superfamily. TrmE GTPase family. In terms of assembly, homodimer. Heterotetramer of two MnmE and two MnmG subunits. It depends on K(+) as a cofactor.

Its subcellular location is the cytoplasm. Functionally, exhibits a very high intrinsic GTPase hydrolysis rate. Involved in the addition of a carboxymethylaminomethyl (cmnm) group at the wobble position (U34) of certain tRNAs, forming tRNA-cmnm(5)s(2)U34. This Lactobacillus delbrueckii subsp. bulgaricus (strain ATCC BAA-365 / Lb-18) protein is tRNA modification GTPase MnmE.